The following is a 337-amino-acid chain: HTH-type transcriptional regulator DegA (337 aa).

In terms of domain architecture, HTH lacI-type spans M1–G57. The segment at residues I5–N24 is a DNA-binding region (H-T-H motif). The disordered stretch occupies residues A300–K319.

Functionally, involved in the control of degradation of B.subtilis amidophosphoribosyltransferase (purF). Probably activates the gene for a degradative protease. This chain is HTH-type transcriptional regulator DegA (degA), found in Bacillus subtilis (strain 168).